We begin with the raw amino-acid sequence, 31 residues long: Cytochrome b6-f complex subunit 6 (31 aa).

Residues Ile-4–Gly-24 form a helical membrane-spanning segment.

The protein belongs to the PetL family. As to quaternary structure, the 4 large subunits of the cytochrome b6-f complex are cytochrome b6, subunit IV (17 kDa polypeptide, PetD), cytochrome f and the Rieske protein, while the 4 small subunits are PetG, PetL, PetM and PetN. The complex functions as a dimer.

It localises to the plastid. The protein resides in the chloroplast thylakoid membrane. Component of the cytochrome b6-f complex, which mediates electron transfer between photosystem II (PSII) and photosystem I (PSI), cyclic electron flow around PSI, and state transitions. PetL is important for photoautotrophic growth as well as for electron transfer efficiency and stability of the cytochrome b6-f complex. In Nandina domestica (Heavenly bamboo), this protein is Cytochrome b6-f complex subunit 6.